The following is a 133-amino-acid chain: Salivary cystatin-L (133 aa).

Residues 1–19 (MTASFALVLLLGGVAVCIA) form the signal peptide. A Cystatin domain is found at 29-115 (KANHQANPEY…VAQRTCTTVV (87 aa)).

Belongs to the cystatin family. Salivary gland.

It localises to the secreted. In terms of biological role, inhibitor of cysteine proteinases. Inhibits host cathepsin L (CTSL) and S (CTSS). Modulates production of various cytokines and chemokines in lipopolysaccharide (LPS)-stimulated mouse dendritic cell. Suppresses maturation of mouse bone-marrow-derived dendritic cells (BMDCs). This chain is Salivary cystatin-L, found in Ixodes persulcatus (Taiga tick).